Consider the following 139-residue polypeptide: uncharacterized protein (139 aa).

The interval 1–26 (MQLVREKRGAHQHVPRKTTEPQKVRG) is disordered. The segment covering 17–26 (KTTEPQKVRG) has biased composition (basic and acidic residues).

This is an uncharacterized protein from Ictalurid herpesvirus 1 (strain Auburn) (IcHV-1).